The following is a 741-amino-acid chain: Phosphoribosylformylglycinamidine synthase subunit PurL (741 aa).

Residue His53 is part of the active site. Residues Tyr56 and Lys95 each coordinate ATP. A Mg(2+)-binding site is contributed by Glu97. Substrate contacts are provided by residues 98–101 (SHNH) and Arg120. Catalysis depends on His99, which acts as the Proton acceptor. Asp121 provides a ligand contact to Mg(2+). Gln244 is a binding site for substrate. Asp274 provides a ligand contact to Mg(2+). 318–320 (ESQ) contributes to the substrate binding site. Residues Asp501 and Gly538 each coordinate ATP. Residue Asn539 coordinates Mg(2+). Ser541 is a binding site for substrate.

Belongs to the FGAMS family. Monomer. Part of the FGAM synthase complex composed of 1 PurL, 1 PurQ and 2 PurS subunits.

The protein resides in the cytoplasm. It catalyses the reaction N(2)-formyl-N(1)-(5-phospho-beta-D-ribosyl)glycinamide + L-glutamine + ATP + H2O = 2-formamido-N(1)-(5-O-phospho-beta-D-ribosyl)acetamidine + L-glutamate + ADP + phosphate + H(+). Its pathway is purine metabolism; IMP biosynthesis via de novo pathway; 5-amino-1-(5-phospho-D-ribosyl)imidazole from N(2)-formyl-N(1)-(5-phospho-D-ribosyl)glycinamide: step 1/2. In terms of biological role, part of the phosphoribosylformylglycinamidine synthase complex involved in the purines biosynthetic pathway. Catalyzes the ATP-dependent conversion of formylglycinamide ribonucleotide (FGAR) and glutamine to yield formylglycinamidine ribonucleotide (FGAM) and glutamate. The FGAM synthase complex is composed of three subunits. PurQ produces an ammonia molecule by converting glutamine to glutamate. PurL transfers the ammonia molecule to FGAR to form FGAM in an ATP-dependent manner. PurS interacts with PurQ and PurL and is thought to assist in the transfer of the ammonia molecule from PurQ to PurL. The chain is Phosphoribosylformylglycinamidine synthase subunit PurL from Limosilactobacillus fermentum (strain NBRC 3956 / LMG 18251) (Lactobacillus fermentum).